The primary structure comprises 464 residues: UDP-N-acetylmuramoylalanine--D-glutamate ligase (464 aa).

Position 127 to 133 (127 to 133 (GSNGKST)) interacts with ATP.

This sequence belongs to the MurCDEF family.

The protein localises to the cytoplasm. It carries out the reaction UDP-N-acetyl-alpha-D-muramoyl-L-alanine + D-glutamate + ATP = UDP-N-acetyl-alpha-D-muramoyl-L-alanyl-D-glutamate + ADP + phosphate + H(+). It participates in cell wall biogenesis; peptidoglycan biosynthesis. Functionally, cell wall formation. Catalyzes the addition of glutamate to the nucleotide precursor UDP-N-acetylmuramoyl-L-alanine (UMA). This Dinoroseobacter shibae (strain DSM 16493 / NCIMB 14021 / DFL 12) protein is UDP-N-acetylmuramoylalanine--D-glutamate ligase.